We begin with the raw amino-acid sequence, 1189 residues long: Lysine-specific demethylase hairless (1189 aa).

Disordered stretches follow at residues 1–40 (MESTPSFLKGTPTWEKTAPENGIVRQEPGSPPRDGLHHGP), 236–257 (HLQRAGEAERPSLHQRDGEMGA), 349–377 (EGGASGASEPSEEVNKASGPRACPPSHHT), 414–480 (AGSP…LQDP), and 505–552 (GEGG…RLST). Basic and acidic residues predominate over residues 239–254 (RAGEAERPSLHQRDGE). Residues 457–469 (KDVDSGQHDEQKG) are compositionally biased toward basic and acidic residues. Residues 566–570 (LCRLL) carry the LXXLL motif 1 motif. Residues 600-625 (CSRCHHGLFNTHWRCPRCSHRLCVAC) form a C6-type zinc finger. Residues 702–750 (GDAGQQKESTQKTPPTPQPSCNGDTHRTKSIKEETPDSAETPAEDRAGR) form a disordered region. The span at 725-736 (DTHRTKSIKEET) shows a compositional bias: basic and acidic residues. Residues 758 to 762 (LCELL) carry the LXXLL motif 2 motif. Positions 946–1157 (DTSRVENLAA…LSAQLCHQGP (212 aa)) constitute a JmjC domain. 3 residues coordinate Fe cation: Cys1007, Glu1009, and His1125.

The cofactor is Fe(2+). In terms of tissue distribution, strongest expression of isoforms 1 and 2 is seen in the small intestine, weaker expression in brain and colon, and trace expression is found in liver, pancreas, spleen, thymus, stomach, salivary gland, appendix and trachea. Isoform 1 is always the most abundant. Isoform 1 is exclusively expressed at low levels in kidney and testis. Isoform 2 is exclusively expressed at high levels in the skin.

The protein localises to the nucleus. It carries out the reaction N(6),N(6)-dimethyl-L-lysyl(9)-[histone H3] + 2 2-oxoglutarate + 2 O2 = L-lysyl(9)-[histone H3] + 2 formaldehyde + 2 succinate + 2 CO2. In terms of biological role, histone demethylase that specifically demethylates both mono- and dimethylated 'Lys-9' of histone H3. May act as a transcription regulator controlling hair biology (via targeting of collagens), neural activity, and cell cycle. The chain is Lysine-specific demethylase hairless (HR) from Homo sapiens (Human).